Here is a 67-residue protein sequence, read N- to C-terminus: MDFLKKSLFLVLFLGFFSLSICEEEKRETEEKENEQEDDREERREEKRLLGMIPVAISAISALSKLG.

An N-terminal signal peptide occupies residues 1–22; sequence MDFLKKSLFLVLFLGFFSLSIC. Residues 23 to 48 constitute a propeptide that is removed on maturation; that stretch reads EEEKRETEEKENEQEDDREERREEKR. The segment at 24-46 is disordered; that stretch reads EEKRETEEKENEQEDDREERREE. The span at 31–40 shows a compositional bias: acidic residues; that stretch reads EKENEQEDDR. Residue L66 is modified to Leucine amide.

The protein belongs to the frog skin active peptide (FSAP) family. Medusin subfamily. As to expression, expressed by the skin glands.

It is found in the secreted. Its function is as follows. Antimicrobial peptide with activity against Gram-positive bacteria (S.aureus, MIC=32 mg/L) and fungi (C.albicans, MIC=128 mg/L). Shows weak hemolytic activity. This Pithecopus hypochondrialis (Orange-legged leaf frog) protein is Medusin-H1.